We begin with the raw amino-acid sequence, 424 residues long: Histidine--tRNA ligase (424 aa).

This sequence belongs to the class-II aminoacyl-tRNA synthetase family. Homodimer.

It localises to the cytoplasm. The enzyme catalyses tRNA(His) + L-histidine + ATP = L-histidyl-tRNA(His) + AMP + diphosphate + H(+). In Salmonella dublin (strain CT_02021853), this protein is Histidine--tRNA ligase.